Reading from the N-terminus, the 166-residue chain is Transcription antitermination protein NusB (166 aa).

A compositionally biased stretch (basic and acidic residues) spans 1–18 (MISDESDRFNPRDPKPAD). The segment at 1 to 28 (MISDESDRFNPRDPKPADAGKPSKSAKR) is disordered.

This sequence belongs to the NusB family.

In terms of biological role, involved in transcription antitermination. Required for transcription of ribosomal RNA (rRNA) genes. Binds specifically to the boxA antiterminator sequence of the ribosomal RNA (rrn) operons. This chain is Transcription antitermination protein NusB, found in Pseudomonas putida (strain GB-1).